Here is a 346-residue protein sequence, read N- to C-terminus: Protein SHI RELATED SEQUENCE 5 (346 aa).

The disordered stretch occupies residues 7 to 31 (LGGRDNNSNNNKQDHHQVDKDHHHQ). Over residues 18-31 (KQDHHQVDKDHHHQ) the composition is skewed to basic and acidic residues. Zn(2+) contacts are provided by C125, C128, C136, C141, C145, and C152. Residues 125-152 (CQDCGNQAKKDCPHMRCRTCCKSRGFHC) constitute a DNA-binding region (zn(2)-C6 fungal-type; degenerate). The span at 175–186 (SLQHHSASSRET) shows a compositional bias: polar residues. The segment at 175 to 215 (SLQHHSASSRETQNAKRLREASGGDNNDDKDHSGGGGSALA) is disordered. A compositionally biased stretch (basic and acidic residues) spans 187 to 207 (QNAKRLREASGGDNNDDKDHS). Residues 269–272 (IGGH) carry the Required for homo- and heterodimerization motif.

This sequence belongs to the SHI protein family.

The protein localises to the nucleus. In terms of biological role, transcription activator that binds DNA on 5'-ACTCTAC-3' and promotes auxin homeostasis-regulating gene expression (e.g. YUC genes), as well as genes affecting stamen development, cell expansion and timing of flowering. Synergistically with other SHI-related proteins, regulates gynoecium, stamen and leaf development in a dose-dependent manner, controlling apical-basal patterning. Promotes style and stigma formation, and influences vascular development during gynoecium development. May also have a role in the formation and/or maintenance of the shoot apical meristem (SAM). This chain is Protein SHI RELATED SEQUENCE 5 (SRS5), found in Arabidopsis thaliana (Mouse-ear cress).